Reading from the N-terminus, the 648-residue chain is Transcriptional regulator ManR (648 aa).

PRD domains lie at 187–292 (KFLH…YPLQ) and 297–404 (LENA…MQGS). H222, H281, H334, and H393 each carry phosphohistidine; by HPr. One can recognise a PTS EIIB type-2 domain in the interval 409 to 500 (KKAVIVCHMG…FIRQLGESHR (92 aa)). Residue C415 is modified to Phosphocysteine; by EIIA. The PTS EIIA type-2 domain maps to 510–648 (NNTTPFLVFL…VMTFLSHLDY (139 aa)). A Phosphohistidine; by EIIB modification is found at H570.

This sequence belongs to the transcriptional antiterminator BglG family.

The enzyme catalyses D-mannose(out) + N(pros)-phospho-L-histidyl-[protein] = D-mannose 6-phosphate(in) + L-histidyl-[protein]. Its activity is regulated as follows. The regulatory activity of ManR is modulated by phosphorylation and dephosphorylation of the various ManR domains. It becomes activated via phosphoryl group transfer from PEP, EI and HPr on the two conserved histidine residues in the PRD 2 domain, whereas phosphorylation of the EIIA-like domain on His-570 by the PTS EIIB-Man domain of ManP inactivates ManR. Its function is as follows. Positively regulates the expression of the mannose operon that consists of three genes, manP, manA, and yjdF, which are responsible for the transport and utilization of mannose. Also activates its own expression. This chain is Transcriptional regulator ManR (manR), found in Bacillus subtilis (strain 168).